Consider the following 361-residue polypeptide: Protein-L-isoaspartate O-methyltransferase domain-containing protein 2 (361 aa).

Glycine 2 is lipidated: N-myristoyl glycine. Serine 64 is an active-site residue. AdoMet binding motif stretches follow at residues 85-94 (LNLGSGTGYL), 160-164 (YDRVY), and 181-191 (LKVGGILVMPL). Positions 240 to 250 (VRSLQDLARIA) are BC-box. Over residues 303–312 (SNPSDDNSSG) the composition is skewed to polar residues. Residues 303–335 (SNPSDDNSSGDLEEERREEEATTPPDAKPEPPV) form a disordered region. The tract at residues 345 to 348 (LPLP) is CUL-box.

The protein belongs to the methyltransferase superfamily. L-isoaspartyl/D-aspartyl protein methyltransferase family.

It localises to the cytoplasm. Its function is as follows. May act as a substrate recognition component of an ECS (Elongin BC-CUL5-SOCS-box protein) E3 ubiquitin ligase complex which mediates the ubiquitination and subsequent proteasomal degradation of target proteins. May bind to the methyltransferase cofactor S-adenosylmethionine (AdoMet) via the N-terminal AdoMet binding motif, but probably does not display methyltransferase activity. This is Protein-L-isoaspartate O-methyltransferase domain-containing protein 2 (PCMTD2) from Bos taurus (Bovine).